The following is a 396-amino-acid chain: Ribosomal RNA large subunit methyltransferase I (396 aa).

Positions 2-79 (TSAVYLQAGR…EKEVIDQHFF (78 aa)) constitute a PUA domain.

Belongs to the methyltransferase superfamily. RlmI family.

The protein resides in the cytoplasm. It carries out the reaction cytidine(1962) in 23S rRNA + S-adenosyl-L-methionine = 5-methylcytidine(1962) in 23S rRNA + S-adenosyl-L-homocysteine + H(+). Its function is as follows. Specifically methylates the cytosine at position 1962 (m5C1962) of 23S rRNA. This chain is Ribosomal RNA large subunit methyltransferase I, found in Pseudoalteromonas translucida (strain TAC 125).